We begin with the raw amino-acid sequence, 257 residues long: Glutamate racemase (257 aa).

Substrate contacts are provided by residues 12–13 and 44–45; these read DS and YG. The active-site Proton donor/acceptor is the Cys-75. Substrate is bound at residue 76 to 77; sequence NT. The Proton donor/acceptor role is filled by Cys-185. 186–187 is a substrate binding site; the sequence is TH.

This sequence belongs to the aspartate/glutamate racemases family.

The enzyme catalyses L-glutamate = D-glutamate. It participates in cell wall biogenesis; peptidoglycan biosynthesis. Functionally, provides the (R)-glutamate required for cell wall biosynthesis. In Clostridium botulinum (strain Kyoto / Type A2), this protein is Glutamate racemase.